The chain runs to 698 residues: MARNTPIERYRNIGICAHVDAGKTTTTERILFYTGLSHKIGEVHDGAATMDWMEQEQERGITITSAATTTFWRGMDAQFQDHRINIIDTPGHVDFTIEVERSLRVLDGAVVVFCGSSGVEPQSETVWRQADKYGVPRIVFVNKMDRAGADFLRVVDQIKNRLGATPVPIQLNIGAEEDFSGVVDLIKMKRINWNEADQGMTFTYEEIPADMQELAEEWRQNLVEAAAEASEELMDKYLEGEELSEAEIKEALRTRTLNNEIVLATCGSAFKNKGVQAVLDAVIEFLPAPVDVPAIKGVDENDNEVERHADDNEPFAALAFKIATDPFVGSLTFMRVYSGVVNTGDAVYNSVKQKRERFGRIVQLHANKREEVKEVRAGDIAAAIGLKDVTTGDTLCDQNAKVILERMEFPEPVIQIAVEPRTQADQEKMGIALGKLAAEDPSFRVETDEESGQTLISGMGELHLDIIVDRMKREFSVECNVGKPQVAYRETIRGTTEVEGKFVRQSGGRGQYGHVWLKIEPSEPDAGFVFVDEIVGGAVPREYISSVAKGIEEQMHNGVLAGYPVLDVKATLFDGSYLDVDSSEMAFKIAGSMAFKKGALEAQPVILEPMMKVEVTTPEDWMGDVVGDLNRRRGMIEGMDDGVAGLKIIRAQVPLSEMFGYATSLRSATQGRASYSMEFAEYGEVSKNIADRIIAERG.

The tr-type G domain occupies 8 to 290 (ERYRNIGICA…AVIEFLPAPV (283 aa)). GTP-binding positions include 17 to 24 (AHVDAGKT), 88 to 92 (DTPGH), and 142 to 145 (NKMD).

It belongs to the TRAFAC class translation factor GTPase superfamily. Classic translation factor GTPase family. EF-G/EF-2 subfamily.

The protein localises to the cytoplasm. Catalyzes the GTP-dependent ribosomal translocation step during translation elongation. During this step, the ribosome changes from the pre-translocational (PRE) to the post-translocational (POST) state as the newly formed A-site-bound peptidyl-tRNA and P-site-bound deacylated tRNA move to the P and E sites, respectively. Catalyzes the coordinated movement of the two tRNA molecules, the mRNA and conformational changes in the ribosome. The sequence is that of Elongation factor G 1 from Aliivibrio fischeri (strain ATCC 700601 / ES114) (Vibrio fischeri).